Reading from the N-terminus, the 160-residue chain is Transcription antitermination protein NusB (160 aa).

This sequence belongs to the NusB family.

Involved in transcription antitermination. Required for transcription of ribosomal RNA (rRNA) genes. Binds specifically to the boxA antiterminator sequence of the ribosomal RNA (rrn) operons. In Rhizobium meliloti (strain 1021) (Ensifer meliloti), this protein is Transcription antitermination protein NusB.